The primary structure comprises 79 residues: uncharacterized protein (79 aa).

The tract at residues 1–27 is disordered; that stretch reads MRQRGQEHLPTSVKSEPRACNNPTVAE.

This is an uncharacterized protein from Homo sapiens (Human).